A 569-amino-acid polypeptide reads, in one-letter code: CTP synthase (569 aa).

The tract at residues 1 to 276 is amidoligase domain; it reads MNQATPTKHV…DAYLVRRLDL (276 aa). Position 18 (Ser-18) interacts with CTP. Ser-18 provides a ligand contact to UTP. ATP contacts are provided by residues 19-24 and Asp-76; that span reads SLGKGL. Positions 76 and 150 each coordinate Mg(2+). Residues 157–159, 197–202, and Lys-233 each bind CTP; these read DIE and KTKPTQ. UTP is bound by residues 197-202 and Lys-233; that span reads KTKPTQ. Residues 301–550 enclose the Glutamine amidotransferase type-1 domain; the sequence is TVALVGKYVD…VGAAIERQRE (250 aa). Residue Gly-364 participates in L-glutamine binding. The Nucleophile; for glutamine hydrolysis role is filled by Cys-391. L-glutamine contacts are provided by residues 392–395, Glu-415, and Arg-476; that span reads LGLQ. Active-site residues include His-523 and Glu-525.

It belongs to the CTP synthase family. As to quaternary structure, homotetramer.

It catalyses the reaction UTP + L-glutamine + ATP + H2O = CTP + L-glutamate + ADP + phosphate + 2 H(+). The catalysed reaction is L-glutamine + H2O = L-glutamate + NH4(+). It carries out the reaction UTP + NH4(+) + ATP = CTP + ADP + phosphate + 2 H(+). The protein operates within pyrimidine metabolism; CTP biosynthesis via de novo pathway; CTP from UDP: step 2/2. With respect to regulation, allosterically activated by GTP, when glutamine is the substrate; GTP has no effect on the reaction when ammonia is the substrate. The allosteric effector GTP functions by stabilizing the protein conformation that binds the tetrahedral intermediate(s) formed during glutamine hydrolysis. Inhibited by the product CTP, via allosteric rather than competitive inhibition. Catalyzes the ATP-dependent amination of UTP to CTP with either L-glutamine or ammonia as the source of nitrogen. Regulates intracellular CTP levels through interactions with the four ribonucleotide triphosphates. In Nocardioides sp. (strain ATCC BAA-499 / JS614), this protein is CTP synthase.